Here is a 217-residue protein sequence, read N- to C-terminus: Ribonuclease HII 2 (217 aa).

The 190-residue stretch at 28–217 (GLLAGVDEAG…VREVLLERRP (190 aa)) folds into the RNase H type-2 domain. Residues D34, E35, and D126 each coordinate a divalent metal cation.

The protein belongs to the RNase HII family. Requires Mn(2+) as cofactor. Mg(2+) serves as cofactor.

The protein resides in the cytoplasm. The enzyme catalyses Endonucleolytic cleavage to 5'-phosphomonoester.. Functionally, endonuclease that specifically degrades the RNA of RNA-DNA hybrids. This is Ribonuclease HII 2 from Methylibium petroleiphilum (strain ATCC BAA-1232 / LMG 22953 / PM1).